Reading from the N-terminus, the 100-residue chain is Aspartyl/glutamyl-tRNA(Asn/Gln) amidotransferase subunit C (100 aa).

It belongs to the GatC family. As to quaternary structure, heterotrimer of A, B and C subunits.

It catalyses the reaction L-glutamyl-tRNA(Gln) + L-glutamine + ATP + H2O = L-glutaminyl-tRNA(Gln) + L-glutamate + ADP + phosphate + H(+). The enzyme catalyses L-aspartyl-tRNA(Asn) + L-glutamine + ATP + H2O = L-asparaginyl-tRNA(Asn) + L-glutamate + ADP + phosphate + 2 H(+). Allows the formation of correctly charged Asn-tRNA(Asn) or Gln-tRNA(Gln) through the transamidation of misacylated Asp-tRNA(Asn) or Glu-tRNA(Gln) in organisms which lack either or both of asparaginyl-tRNA or glutaminyl-tRNA synthetases. The reaction takes place in the presence of glutamine and ATP through an activated phospho-Asp-tRNA(Asn) or phospho-Glu-tRNA(Gln). In Staphylococcus epidermidis (strain ATCC 35984 / DSM 28319 / BCRC 17069 / CCUG 31568 / BM 3577 / RP62A), this protein is Aspartyl/glutamyl-tRNA(Asn/Gln) amidotransferase subunit C.